A 1072-amino-acid chain; its full sequence is Carbamoyl phosphate synthase large chain (1072 aa).

Residues 1–401 (MPKRLDINTI…SLLKAVRSLE (401 aa)) are carboxyphosphate synthetic domain. ATP contacts are provided by Arg129, Arg169, Gly175, Gly176, Lys208, Ile210, Glu215, Gly241, Val242, His243, Gln284, and Glu298. The ATP-grasp 1 domain maps to 133–327 (RTLMQDLNEP…IAKLAAKIAV (195 aa)). 3 residues coordinate Mg(2+): Gln284, Glu298, and Asn300. Residues Gln284, Glu298, and Asn300 each coordinate Mn(2+). The segment at 402 to 546 (LGIYHLELDH…YSTYADENES (145 aa)) is oligomerization domain. The segment at 547–929 (IVTDRKSVVV…ALYKGLVASG (383 aa)) is carbamoyl phosphate synthetic domain. Positions 671-861 (EAALTKLGIP…MANVATKVIL (191 aa)) constitute an ATP-grasp 2 domain. 9 residues coordinate ATP: Arg707, Arg746, Glu752, Gly777, Val778, His779, Ser780, Gln820, and Glu832. The Mg(2+) site is built by Gln820, Glu832, and Asn834. Positions 820, 832, and 834 each coordinate Mn(2+). Positions 930-1072 (INIPTHGSVI…QTKRHEVVHA (143 aa)) constitute an MGS-like domain. Residues 930-1072 (INIPTHGSVI…QTKRHEVVHA (143 aa)) form an allosteric domain region.

The protein belongs to the CarB family. In terms of assembly, composed of two chains; the small (or glutamine) chain promotes the hydrolysis of glutamine to ammonia, which is used by the large (or ammonia) chain to synthesize carbamoyl phosphate. Tetramer of heterodimers (alpha,beta)4. Mg(2+) is required as a cofactor. Requires Mn(2+) as cofactor.

The catalysed reaction is hydrogencarbonate + L-glutamine + 2 ATP + H2O = carbamoyl phosphate + L-glutamate + 2 ADP + phosphate + 2 H(+). The enzyme catalyses hydrogencarbonate + NH4(+) + 2 ATP = carbamoyl phosphate + 2 ADP + phosphate + 2 H(+). It functions in the pathway amino-acid biosynthesis; L-arginine biosynthesis; carbamoyl phosphate from bicarbonate: step 1/1. It participates in pyrimidine metabolism; UMP biosynthesis via de novo pathway; (S)-dihydroorotate from bicarbonate: step 1/3. Functionally, large subunit of the glutamine-dependent carbamoyl phosphate synthetase (CPSase). CPSase catalyzes the formation of carbamoyl phosphate from the ammonia moiety of glutamine, carbonate, and phosphate donated by ATP, constituting the first step of 2 biosynthetic pathways, one leading to arginine and/or urea and the other to pyrimidine nucleotides. The large subunit (synthetase) binds the substrates ammonia (free or transferred from glutamine from the small subunit), hydrogencarbonate and ATP and carries out an ATP-coupled ligase reaction, activating hydrogencarbonate by forming carboxy phosphate which reacts with ammonia to form carbamoyl phosphate. This Bacillus cereus (strain ATCC 14579 / DSM 31 / CCUG 7414 / JCM 2152 / NBRC 15305 / NCIMB 9373 / NCTC 2599 / NRRL B-3711) protein is Carbamoyl phosphate synthase large chain.